The sequence spans 1221 residues: MECALLLACAFPAAGSGPPRGLAGLGRVAKALQLCCLCCASVAAALASDSSSGASGLNDDYVFVTPVEVDSAGSYISHDILHNGRKKRSAQNARSSLHYRFSAFGQELHLELKPSAILSSHFIVQVLGKDGASETQKPEVQQCFYQGFIRNDSSSSVAVSTCAGLSGLIRTRKNEFLISPLPQLLAQEHNYSSPAGHHPHVLYKRTAEEKIQRYRGYPGSGRNYPGYSPSHIPHASQSRETEYHHRRLQKQHFCGRRKKYAPKPPTEDTYLRFDEYGSSGRPRRSAGKSQKGLNVETLVVADKKMVEKHGKGNVTTYILTVMNMVSGLFKDGTIGSDINVVVVSLILLEQEPGGLLINHHADQSLNSFCQWQSALIGKNGKRHDHAILLTGFDICSWKNEPCDTLGFAPISGMCSKYRSCTINEDTGLGLAFTIAHESGHNFGMIHDGEGNPCRKAEGNIMSPTLTGNNGVFSWSSCSRQYLKKFLSTPQAGCLVDEPKQAGQYKYPDKLPGQIYDADTQCKWQFGAKAKLCSLGFVKDICKSLWCHRVGHRCETKFMPAAEGTVCGLSMWCRQGQCVKFGELGPRPIHGQWSAWSKWSECSRTCGGGVKFQERHCNNPKPQYGGLFCPGSSRIYQLCNINPCNENSLDFRAQQCAEYNSKPFRGWFYQWKPYTKVEEEDRCKLYCKAENFEFFFAMSGKVKDGTPCSPNKNDVCIDGVCELVGCDHELGSKAVSDACGVCKGDNSTCKFYKGLYLNQHKANEYYPVVLIPAGARSIEIQELQVSSSYLAVRSLSQKYYLTGGWSIDWPGEFPFAGTTFEYQRSFNRPERLYAPGPTNETLVFEILMQGKNPGIAWKYALPKVMNGTPPATKRPAYTWSIVQSECSVSCGGGYINVKAICLRDQNTQVNSSFCSAKTKPVTEPKICNAFSCPAYWMPGEWSTCSKACAGGQQSRKIQCVQKKPFQKEEAVLHSLCPVSTPTQVQACNSHACPPQWSLGPWSQCSKTCGRGVRKRELLCKGSAAETLPESQCTSLPRPELQEGCVLGRCPKNSRLQWVASSWSECSATCGLGVRKREMKCSEKGFQGKLITFPERRCRNIKKPNLDLEETCNRRACPAHPVYNMVAGWYSLPWQQCTVTCGGGVQTRSVHCVQQGRPSSSCLLHQKPPVLRACNTNFCPAPEKREDPSCVDFFNWCHLVPQHGVCNHKFYGKQCCKSCTRKI.

A signal peptide spans 1-47 (MECALLLACAFPAAGSGPPRGLAGLGRVAKALQLCCLCCASVAAALA). The propeptide occupies 48 to 284 (SDSSSGASGL…EYGSSGRPRR (237 aa)). Asparagine 151 and asparagine 190 each carry an N-linked (GlcNAc...) asparagine glycan. Residues 252–259 (HFCGRRKK) carry the Cysteine switch motif. Cysteine 254 contributes to the Zn(2+) binding site. Positions 258–291 (KKYAPKPPTEDTYLRFDEYGSSGRPRRSAGKSQK) are disordered. Basic and acidic residues predominate over residues 265–275 (PTEDTYLRFDE). The Peptidase M12B domain maps to 293 to 498 (LNVETLVVAD…PQAGCLVDEP (206 aa)). The N-linked (GlcNAc...) asparagine glycan is linked to asparagine 313. 11 disulfide bridges follow: cysteine 369–cysteine 420, cysteine 395–cysteine 402, cysteine 414–cysteine 493, cysteine 453–cysteine 477, cysteine 521–cysteine 546, cysteine 532–cysteine 553, cysteine 541–cysteine 572, cysteine 566–cysteine 577, cysteine 601–cysteine 638, cysteine 605–cysteine 643, and cysteine 616–cysteine 628. Histidine 436 serves as a coordination point for Zn(2+). Glutamate 437 is a catalytic residue. 2 residues coordinate Zn(2+): histidine 440 and histidine 446. The Disintegrin domain maps to 498–577 (PKQAGQYKYP…LSMWCRQGQC (80 aa)). One can recognise a TSP type-1 1 domain in the interval 589-644 (HGQWSAWSKWSECSRTCGGGVKFQERHCNNPKPQYGGLFCPGSSRIYQLCNINPCN). N-linked (GlcNAc...) asparagine glycans are attached at residues asparagine 745, asparagine 838, and asparagine 909. Positions 750–876 (FYKGLYLNQH…TPPATKRPAY (127 aa)) are spacer. 4 TSP type-1 domains span residues 931 to 990 (CPAY…NSHA), 991 to 1049 (CPPQ…GRCP), 1052 to 1116 (SRLQ…RACP), and 1123 to 1178 (MVAG…NFCP). A PLAC domain is found at 1184–1221 (EDPSCVDFFNWCHLVPQHGVCNHKFYGKQCCKSCTRKI).

Zn(2+) serves as cofactor. In terms of processing, the precursor is cleaved by a furin endopeptidase. Post-translationally, glycosylated. Can be O-fucosylated by POFUT2 on a serine or a threonine residue found within the consensus sequence C1-X(2)-(S/T)-C2-G of the TSP type-1 repeat domains where C1 and C2 are the first and second cysteine residue of the repeat, respectively. Fucosylated repeats can then be further glycosylated by the addition of a beta-1,3-glucose residue by the glucosyltransferase, B3GALTL. Fucosylation mediates the efficient secretion of ADAMTS family members. Can also be C-glycosylated with one or two mannose molecules on tryptophan residues within the consensus sequence W-X-X-W of the TPRs, and N-glycosylated. These other glycosylations can also facilitate secretion. As to expression, expressed in fetal lung, liver, and kidney and in adult brain, prostate, submaxillary gland, and endothelium.

Its subcellular location is the secreted. The protein localises to the extracellular space. It is found in the extracellular matrix. In Homo sapiens (Human), this protein is A disintegrin and metalloproteinase with thrombospondin motifs 18 (ADAMTS18).